The following is a 206-amino-acid chain: 2,3-bisphosphoglycerate-dependent phosphoglycerate mutase (206 aa).

Substrate contacts are provided by residues 9–16, 22–23, Arg-61, 88–91, Lys-99, 115–116, and 159–160; these read RHGQSEWN, TG, ERDY, RR, and GN. The active-site Tele-phosphohistidine intermediate is His-10. Glu-88 acts as the Proton donor/acceptor in catalysis.

This sequence belongs to the phosphoglycerate mutase family. BPG-dependent PGAM subfamily. In terms of assembly, homodimer.

It catalyses the reaction (2R)-2-phosphoglycerate = (2R)-3-phosphoglycerate. The protein operates within carbohydrate degradation; glycolysis; pyruvate from D-glyceraldehyde 3-phosphate: step 3/5. Its function is as follows. Catalyzes the interconversion of 2-phosphoglycerate and 3-phosphoglycerate. This chain is 2,3-bisphosphoglycerate-dependent phosphoglycerate mutase, found in Chelativorans sp. (strain BNC1).